Consider the following 841-residue polypeptide: Protein translocase subunit SecA (841 aa).

Residues Q87, 105-109, and D494 contribute to the ATP site; that span reads GEGKT. The Zn(2+) site is built by C825, C827, C836, and C837.

Belongs to the SecA family. As to quaternary structure, monomer and homodimer. Part of the essential Sec protein translocation apparatus which comprises SecA, SecYEG and auxiliary proteins SecDF-YajC and YidC. It depends on Zn(2+) as a cofactor.

The protein localises to the cell inner membrane. It is found in the cytoplasm. It catalyses the reaction ATP + H2O + cellular proteinSide 1 = ADP + phosphate + cellular proteinSide 2.. In terms of biological role, part of the Sec protein translocase complex. Interacts with the SecYEG preprotein conducting channel. Has a central role in coupling the hydrolysis of ATP to the transfer of proteins into and across the cell membrane, serving as an ATP-driven molecular motor driving the stepwise translocation of polypeptide chains across the membrane. This Syntrophus aciditrophicus (strain SB) protein is Protein translocase subunit SecA.